The sequence spans 765 residues: MPRQFPKLNMSDLDEHVRLLAEKVFAKVLREEDSKDVMSLFTVPKDCPIGQKEAKERELQKELAEQKSVETAKRKKSFKMIRSQSMSLQMPTQDWKGPPSVSPAMSPTTPLVLGAASKPGLAPYDMPEYQRATISGDYCAGITMEDYEQAAKSLAKALMIREKYARLAYHRFPRTTAQYLAHQGESVPLEEGLPDFHPPPLPQEDPYCLDDAPPNLGYLVRMQGGVLFVYDNQTMLERQEPHSLPYPDLETYIVDMSHILALITDGPTKTYCHRRLNFLESKFSLHEMLNEMSEFKELKSNPHRDFYNVRKVDTHIHAAACMNQKHLLRFIKYTYQTEPDRTVAEKLGRKITLRQVFDSLHMDPYDLTVDSLDVHAGRQTFHGFDKFNSKYNPVGASELRDLYLKTENYLGGEYFARMVKEVARELEDSKYQYSEPRLSIYGRSPKEWSSLARWFIQHKVYSPNMRWIIQVPRIYDIFRSKKLLPSFGKMLENIFLPLFQATINPQDHRELHLFLKYVTGFDSVDDESKHSDHMFSDKSPSPDLWTSEQNPPYSYYLYYMYANIMVLNNLRRERGLSTFLFRPHCGEAGSITHLVSAFLTADNISHGLLLKKSPVLQYLYYLAQIPIAMSPLSNNSLFLEYSKNPLREFLHKGLHVSLSTDDPMQFHYTKEALMEEYAIAAQVWKLSTCDLCEIARNSVLQSGLSHQEKQKFLGQNYYKEGPEGNDIRKTNVAQIRMAFRYETLCNELSFLSDAMKSEEITALAD.

A phosphoserine mark is found at Ser-85 and Ser-106. Residues His-315 and His-317 each coordinate Zn(2+). Substrate contacts are provided by residues His-317 and 386–391; that span reads KFNSKY. His-584 lines the Zn(2+) pocket. Glu-587 contributes to the substrate binding site. The active-site Proton acceptor is His-606. Asp-661 contributes to the Zn(2+) binding site. 662 to 665 provides a ligand contact to substrate; sequence DPMQ.

The protein belongs to the metallo-dependent hydrolases superfamily. Adenosine and AMP deaminases family. As to quaternary structure, homotetramer. It depends on Zn(2+) as a cofactor. As to expression, expressed in adult tissues such as aorta, heart, kidney, lung, muscle and thyroid. Weakly expressed in thyroid and not detected in liver.

It carries out the reaction AMP + H2O + H(+) = IMP + NH4(+). Its pathway is purine metabolism; IMP biosynthesis via salvage pathway; IMP from AMP: step 1/1. Its function is as follows. AMP deaminase plays a critical role in energy metabolism. This Rattus norvegicus (Rat) protein is AMP deaminase 3.